The chain runs to 698 residues: UvrABC system protein B (698 aa).

Residues 35-210 (ARLQAGEKDI…TFRVRGDTVE (176 aa)) enclose the Helicase ATP-binding domain. Position 48–55 (48–55 (GATGTGKS)) interacts with ATP. A Beta-hairpin motif is present at residues 101–124 (YYDYYQPEAYVPSSDTYIEKDSSI). Positions 438–604 (QIDDLLAEIN…PLRKRIGDIT (167 aa)) constitute a Helicase C-terminal domain. The region spanning 654–689 (AELIQELTDQMHVAAGELQFEVAARLRDEISDLKKE) is the UVR domain.

The protein belongs to the UvrB family. Forms a heterotetramer with UvrA during the search for lesions. Interacts with UvrC in an incision complex.

The protein resides in the cytoplasm. The UvrABC repair system catalyzes the recognition and processing of DNA lesions. A damage recognition complex composed of 2 UvrA and 2 UvrB subunits scans DNA for abnormalities. Upon binding of the UvrA(2)B(2) complex to a putative damaged site, the DNA wraps around one UvrB monomer. DNA wrap is dependent on ATP binding by UvrB and probably causes local melting of the DNA helix, facilitating insertion of UvrB beta-hairpin between the DNA strands. Then UvrB probes one DNA strand for the presence of a lesion. If a lesion is found the UvrA subunits dissociate and the UvrB-DNA preincision complex is formed. This complex is subsequently bound by UvrC and the second UvrB is released. If no lesion is found, the DNA wraps around the other UvrB subunit that will check the other stand for damage. In Beutenbergia cavernae (strain ATCC BAA-8 / DSM 12333 / CCUG 43141 / JCM 11478 / NBRC 16432 / NCIMB 13614 / HKI 0122), this protein is UvrABC system protein B.